The following is a 253-amino-acid chain: MSIHLLIVDALNLIRRIHAVQGSPCGDACSAALRQLVGHTTPSHAVAVFDQDDRAESWRHRLLPGYKAGRQAMPDALAQEMESLRAAFTAQGVACWHSPGNEADDLAATLAYKVAQGGHRVTIVSTDKGYCQLLSPQIQIRDYFQKRWLDLPFVQREFGVAPQQLTDFWGLAGIGSSKIPGISGIGAKTAAALLKEFGSLEALYQHLAQVPERWRQRLTEQREMAEICRRVATLQTDLALHGNLQQLRLNGRA.

Position 104 (aspartate 104) interacts with Mg(2+). The 5'-3' exonuclease domain occupies 160–250; sequence VAPQQLTDFW…HGNLQQLRLN (91 aa). K(+)-binding residues include leucine 171, alanine 172, proline 180, isoleucine 182, and isoleucine 185. Residues 184–189 form an interaction with DNA region; the sequence is GIGAKT.

It belongs to the Xni family. Mg(2+) is required as a cofactor. K(+) serves as cofactor.

Its function is as follows. Has flap endonuclease activity. During DNA replication, flap endonucleases cleave the 5'-overhanging flap structure that is generated by displacement synthesis when DNA polymerase encounters the 5'-end of a downstream Okazaki fragment. This Edwardsiella ictaluri (strain 93-146) protein is Flap endonuclease Xni.